We begin with the raw amino-acid sequence, 323 residues long: rRNA 2'-O-methyltransferase fibrillarin (323 aa).

Positions 1–78 (MRPGFSPRGG…GGGRGGFGGG (78 aa)) are disordered. 2 stretches are compositionally biased toward gly residues: residues 7–44 (PRGGRGGFGDRGGFGGRGGFGDRGGFRGGSRGGFGGRG) and 63–78 (GRGGPRGGGRGGFGGG). Asymmetric dimethylarginine is present on residues R8, R17, R23, and R29. Residues 174–175 (TT), 193–194 (EF), 218–219 (DA), and 238–241 (DVAQ) contribute to the S-adenosyl-L-methionine site. The helical stretch occupies residues 276–308 (APEAVFAAEVKKMQQENMKPQEQLTLEPYERDH).

The protein belongs to the methyltransferase superfamily. Fibrillarin family. In terms of assembly, component of box C/D small nucleolar ribonucleoprotein (snoRNP) particles. Part of the small subunit (SSU) processome, composed of more than 70 proteins and the RNA chaperone small nucleolar RNA (snoRNA) U3. By homology to other fibrillarins, some or all of the N-terminal domain arginines are modified to asymmetric dimethylarginine (DMA).

Its subcellular location is the nucleus. The protein resides in the nucleolus. It localises to the nucleoplasm. It carries out the reaction L-glutaminyl-[histone H2A] + S-adenosyl-L-methionine = N(5)-methyl-L-glutaminyl-[histone H2A] + S-adenosyl-L-homocysteine + H(+). It catalyses the reaction a ribonucleotide in rRNA + S-adenosyl-L-methionine = a 2'-O-methylribonucleotide in rRNA + S-adenosyl-L-homocysteine + H(+). The catalysed reaction is a ribonucleotide in U6 snRNA + S-adenosyl-L-methionine = a 2'-O-methylribonucleotide in U6 snRNA + S-adenosyl-L-homocysteine + H(+). Its function is as follows. S-adenosyl-L-methionine-dependent methyltransferase that has the ability to methylate both RNAs and proteins. Involved in pre-rRNA processing by catalyzing the site-specific 2'-hydroxyl methylation of ribose moieties in pre-ribosomal RNA. Probably catalyzes 2'-O-methylation of U6 snRNAs in box C/D RNP complexes. U6 snRNA 2'-O-methylation is required for mRNA splicing fidelity. Also acts as a protein methyltransferase by mediating methylation of 'Gln-105' of histone H2A (H2AQ104me), a modification that impairs binding of the FACT complex and is specifically present at 35S ribosomal DNA locus. Part of the small subunit (SSU) processome, first precursor of the small eukaryotic ribosomal subunit. During the assembly of the SSU processome in the nucleolus, many ribosome biogenesis factors, an RNA chaperone and ribosomal proteins associate with the nascent pre-rRNA and work in concert to generate RNA folding, modifications, rearrangements and cleavage as well as targeted degradation of pre-ribosomal RNA by the RNA exosome. This Xenopus laevis (African clawed frog) protein is rRNA 2'-O-methyltransferase fibrillarin (fbl).